Reading from the N-terminus, the 210-residue chain is Na(+)-translocating NADH-quinone reductase subunit D (210 aa).

5 consecutive transmembrane segments (helical) span residues 42-62 (FVMT…VSLI), 72-92 (IIVQ…VLKA), 103-123 (VFVG…AFAM), 131-151 (LIDG…VGFF), and 178-198 (NGLM…IWVI).

The protein belongs to the NqrDE/RnfAE family. As to quaternary structure, composed of six subunits; NqrA, NqrB, NqrC, NqrD, NqrE and NqrF.

The protein resides in the cell inner membrane. It catalyses the reaction a ubiquinone + n Na(+)(in) + NADH + H(+) = a ubiquinol + n Na(+)(out) + NAD(+). In terms of biological role, NQR complex catalyzes the reduction of ubiquinone-1 to ubiquinol by two successive reactions, coupled with the transport of Na(+) ions from the cytoplasm to the periplasm. NqrA to NqrE are probably involved in the second step, the conversion of ubisemiquinone to ubiquinol. The polypeptide is Na(+)-translocating NADH-quinone reductase subunit D (Vibrio campbellii (strain ATCC BAA-1116)).